We begin with the raw amino-acid sequence, 440 residues long: Enolase (440 aa).

Residues histidine 159 and glutamate 168 each contribute to the substrate site. The Proton donor role is filled by glutamate 211. Mg(2+) contacts are provided by aspartate 245, glutamate 296, and aspartate 321. 2 residues coordinate substrate: glutamate 296 and aspartate 321. Catalysis depends on lysine 346, which acts as the Proton acceptor. Residues 373–376 (SHRS) and lysine 397 contribute to the substrate site.

It belongs to the enolase family. As to quaternary structure, homodimer. Requires Mg(2+) as cofactor.

The protein resides in the cytoplasm. It catalyses the reaction (2R)-2-phosphoglycerate = phosphoenolpyruvate + H2O. It functions in the pathway carbohydrate degradation; glycolysis; pyruvate from D-glyceraldehyde 3-phosphate: step 4/5. This Tuber borchii (White truffle) protein is Enolase (eno-1).